Here is a 689-residue protein sequence, read N- to C-terminus: Elongation factor G (689 aa).

Residues 8–282 (ENTRNLGIMA…AVVDYLPSPL (275 aa)) form the tr-type G domain. GTP is bound by residues 17 to 24 (AHIDAGKT), 81 to 85 (DTPGH), and 135 to 138 (NKMD).

This sequence belongs to the TRAFAC class translation factor GTPase superfamily. Classic translation factor GTPase family. EF-G/EF-2 subfamily.

It is found in the cytoplasm. Functionally, catalyzes the GTP-dependent ribosomal translocation step during translation elongation. During this step, the ribosome changes from the pre-translocational (PRE) to the post-translocational (POST) state as the newly formed A-site-bound peptidyl-tRNA and P-site-bound deacylated tRNA move to the P and E sites, respectively. Catalyzes the coordinated movement of the two tRNA molecules, the mRNA and conformational changes in the ribosome. This chain is Elongation factor G, found in Mesoplasma florum (strain ATCC 33453 / NBRC 100688 / NCTC 11704 / L1) (Acholeplasma florum).